We begin with the raw amino-acid sequence, 171 residues long: tRNA-specific adenosine deaminase (171 aa).

Residues 6-133 form the CMP/dCMP-type deaminase domain; sequence EEQTYFMQEA…ERLNHRVQVE (128 aa). Residue H57 participates in Zn(2+) binding. The active-site Proton donor is the E59. Residues C87 and C90 each contribute to the Zn(2+) site.

This sequence belongs to the cytidine and deoxycytidylate deaminase family. Homodimer. Zn(2+) serves as cofactor.

It catalyses the reaction adenosine(34) in tRNA + H2O + H(+) = inosine(34) in tRNA + NH4(+). Functionally, catalyzes the deamination of adenosine to inosine at the wobble position 34 of tRNA(Arg2). This Streptococcus pyogenes serotype M1 protein is tRNA-specific adenosine deaminase.